Reading from the N-terminus, the 155-residue chain is Ribosomal RNA large subunit methyltransferase H (155 aa).

Residues Leu-72, Gly-104, and 123-128 (LSKMTF) contribute to the S-adenosyl-L-methionine site.

It belongs to the RNA methyltransferase RlmH family. In terms of assembly, homodimer.

It localises to the cytoplasm. The catalysed reaction is pseudouridine(1915) in 23S rRNA + S-adenosyl-L-methionine = N(3)-methylpseudouridine(1915) in 23S rRNA + S-adenosyl-L-homocysteine + H(+). Its function is as follows. Specifically methylates the pseudouridine at position 1915 (m3Psi1915) in 23S rRNA. This chain is Ribosomal RNA large subunit methyltransferase H, found in Cytophaga hutchinsonii (strain ATCC 33406 / DSM 1761 / CIP 103989 / NBRC 15051 / NCIMB 9469 / D465).